Here is a 314-residue protein sequence, read N- to C-terminus: Ribosomal RNA small subunit methyltransferase H (314 aa).

S-adenosyl-L-methionine contacts are provided by residues 35 to 37 (GGH), D54, F83, D104, and Q111.

This sequence belongs to the methyltransferase superfamily. RsmH family.

The protein localises to the cytoplasm. The catalysed reaction is cytidine(1402) in 16S rRNA + S-adenosyl-L-methionine = N(4)-methylcytidine(1402) in 16S rRNA + S-adenosyl-L-homocysteine + H(+). Its function is as follows. Specifically methylates the N4 position of cytidine in position 1402 (C1402) of 16S rRNA. The sequence is that of Ribosomal RNA small subunit methyltransferase H from Oenococcus oeni (strain ATCC BAA-331 / PSU-1).